A 245-amino-acid chain; its full sequence is tRNA pseudouridine synthase A (245 aa).

The Nucleophile role is filled by aspartate 52. Substrate is bound at residue tyrosine 110.

This sequence belongs to the tRNA pseudouridine synthase TruA family. Homodimer.

The catalysed reaction is uridine(38/39/40) in tRNA = pseudouridine(38/39/40) in tRNA. Formation of pseudouridine at positions 38, 39 and 40 in the anticodon stem and loop of transfer RNAs. This is tRNA pseudouridine synthase A from Borrelia hermsii (strain HS1 / DAH).